A 200-amino-acid polypeptide reads, in one-letter code: uncharacterized protein (200 aa).

Residues 149–200 form a disordered region; it reads APDPGGSVATEEVLRSDDRDSHTQDSASEWPEGNDSVGSAAMRIDLSRIGGT. Positions 160 to 171 are enriched in basic and acidic residues; the sequence is EVLRSDDRDSHT.

This sequence to A.tumefaciens Ti plasmid conjugal transfer region I ORFR2 and ORFR3.

This is an uncharacterized protein from Sinorhizobium fredii (strain NBRC 101917 / NGR234).